The primary structure comprises 158 residues: SsrA-binding protein (158 aa).

This sequence belongs to the SmpB family.

It localises to the cytoplasm. In terms of biological role, required for rescue of stalled ribosomes mediated by trans-translation. Binds to transfer-messenger RNA (tmRNA), required for stable association of tmRNA with ribosomes. tmRNA and SmpB together mimic tRNA shape, replacing the anticodon stem-loop with SmpB. tmRNA is encoded by the ssrA gene; the 2 termini fold to resemble tRNA(Ala) and it encodes a 'tag peptide', a short internal open reading frame. During trans-translation Ala-aminoacylated tmRNA acts like a tRNA, entering the A-site of stalled ribosomes, displacing the stalled mRNA. The ribosome then switches to translate the ORF on the tmRNA; the nascent peptide is terminated with the 'tag peptide' encoded by the tmRNA and targeted for degradation. The ribosome is freed to recommence translation, which seems to be the essential function of trans-translation. The protein is SsrA-binding protein of Chloroflexus aggregans (strain MD-66 / DSM 9485).